The following is a 422-amino-acid chain: Putidaredoxin reductase CamA (422 aa).

Positions 15, 37, 50, 83, and 134 each coordinate FAD. Residue 156–165 (GGGYIGLEVA) participates in NAD(+) binding. FAD contacts are provided by aspartate 284 and valine 302.

This sequence belongs to the FAD-dependent oxidoreductase family. As to quaternary structure, homodimer or monomer. FAD serves as cofactor.

The enzyme catalyses 2 reduced [2Fe-2S]-[putidaredoxin] + NAD(+) + H(+) = 2 oxidized [2Fe-2S]-[putidaredoxin] + NADH. The protein operates within terpene metabolism; (R)-camphor degradation. In terms of biological role, the oxidation of camphor by cytochrome P450-CAM CamC requires the participation of the flavoprotein, putidaredoxin reductase CamA, and the iron-sulfur protein, putidaredoxin CamB, to mediate the transfer of electrons from NADH to P450 for oxygen activation. In Pseudomonas putida (Arthrobacter siderocapsulatus), this protein is Putidaredoxin reductase CamA.